Here is an 845-residue protein sequence, read N- to C-terminus: Prickle-like protein 2 (845 aa).

The 109-residue stretch at 18 to 126 (FDFQRSSTSD…NVRPFPVTMT (109 aa)) folds into the PET domain. Phosphoserine is present on Ser92. LIM zinc-binding domains are found at residues 128-193 (AICE…CLKP), 193-253 (PRCA…LYAE), and 253-317 (EYCD…EDPN). 2 disordered regions span residues 314-346 (EDPN…NKGK) and 483-546 (YSDM…GSME). Positions 318–327 (GSDSSDSAFQ) are enriched in polar residues. Ser319, Ser321, and Ser322 each carry phosphoserine. Phosphothreonine occurs at positions 535, 537, and 540. Ser544 and Ser547 each carry phosphoserine. The tract at residues 558–581 (AEGGAKRQEHLSRFSMPDLSKDSG) is disordered. Ser608 and Ser643 each carry phosphoserine. The tract at residues 642–700 (QSFDFDGGIASSKLPGQEGVHIQPMSERTRRRTTSRDDNRRFRPHRSRRSRRSRSDNAL) is disordered. Residues 683 to 693 (FRPHRSRRSRR) are compositionally biased toward basic residues. A Phosphoserine modification is found at Ser732. Residues 823–845 (STLGGRGQLHSRKRQKSKNCIIS) form a disordered region. Cys842 bears the Cysteine methyl ester mark. The S-farnesyl cysteine moiety is linked to residue Cys842. Residues 843 to 845 (IIS) constitute a propeptide, removed in mature form.

It belongs to the prickle / espinas / testin family. Expressed in the hippocampus and cerebral cortex.

The protein localises to the nucleus membrane. In Mus musculus (Mouse), this protein is Prickle-like protein 2 (Prickle2).